Reading from the N-terminus, the 52-residue chain is Large ribosomal subunit protein eL39 (52 aa).

It belongs to the eukaryotic ribosomal protein eL39 family.

In Desulfurococcus amylolyticus (strain DSM 18924 / JCM 16383 / VKM B-2413 / 1221n) (Desulfurococcus kamchatkensis), this protein is Large ribosomal subunit protein eL39.